Consider the following 271-residue polypeptide: Mannosyl-3-phosphoglycerate phosphatase (271 aa).

The active-site Nucleophile is D13. Positions 13, 15, and 214 each coordinate Mg(2+).

Belongs to the HAD-like hydrolase superfamily. MPGP family. It depends on Mg(2+) as a cofactor.

The protein resides in the cytoplasm. It catalyses the reaction 2-O-(alpha-D-mannosyl)-3-phosphoglycerate + H2O = (2R)-2-O-(alpha-D-mannosyl)-glycerate + phosphate. The polypeptide is Mannosyl-3-phosphoglycerate phosphatase (yedP) (Escherichia coli O157:H7).